The sequence spans 283 residues: Tetraspanin-33 (283 aa).

Residues 1–24 (MARRPGVPAAYGDEFSFVSPLVKY) lie on the Cytoplasmic side of the membrane. A helical transmembrane segment spans residues 25 to 45 (LLFFFNMLFWVISMVMVAVGV). Topologically, residues 46–64 (YARLMKHAEAALACLAVDP) are extracellular. The helical transmembrane segment at 65 to 85 (AILLIVVGVLMFLLTFCGCIG) threads the bilayer. Topologically, residues 86–96 (SLRENICLLQT) are cytoplasmic. The chain crosses the membrane as a helical span at residues 97-117 (FSLCLTIVFLLQLAAGILGFV). Residues 118–235 (FSDKARGKVS…DKLVNWIHSN (118 aa)) are Extracellular-facing. 4 cysteine pairs are disulfide-bonded: Cys-156/Cys-224, Cys-157/Cys-189, Cys-173/Cys-183, and Cys-190/Cys-203. Asn-172 carries an N-linked (GlcNAc...) asparagine glycan. The chain crosses the membrane as a helical span at residues 236–256 (LFLLGGVALGLAIPQLVGILL). At 257–283 (SQVLVNQIKDQIKLQLYNQQHRADPWY) the chain is on the cytoplasmic side.

This sequence belongs to the tetraspanin (TM4SF) family. Homodimer; disulfide-linked. Interacts (via extracellular domain) with ADAM10 (via extracellular domain). Interacts (via cytoplasmic domain) with PLEKHA7 (via WW domains); the interaction is dependent on PDZD11 being bound to PLEKHA7 and facilitates the docking of ADAM10 to zonula adherens. As to expression, predominantly expressed in erythroblasts.

It is found in the cell membrane. Its subcellular location is the cell junction. The protein resides in the adherens junction. The protein localises to the cytoplasm. Its function is as follows. Part of TspanC8 subgroup, composed of 6 members that interact with the transmembrane metalloprotease ADAM10. This interaction is required for ADAM10 exit from the endoplasmic reticulum and for enzymatic maturation and trafficking to the cell surface as well as substrate specificity. Different TspanC8/ADAM10 complexes have distinct substrates. Plays an important role in normal erythropoiesis. It has a role in the differentiation of erythroid progenitors. Negatively regulates ligand-induced Notch activity probably by regulating ADAM10 activity. Mediates docking of ADAM10 to zonula adherens by interacting with ADAM10 and, in a PDZD11-dependent manner, with the zonula adherens protein PLEKHA7. This chain is Tetraspanin-33 (Tspan33), found in Mus musculus (Mouse).